We begin with the raw amino-acid sequence, 170 residues long: Acireductone dioxygenase (170 aa).

Fe(2+) is bound by residues His99, His101, Glu105, and His144. Residues His99, His101, Glu105, and His144 each contribute to the Ni(2+) site.

It belongs to the acireductone dioxygenase (ARD) family. Monomer. Fe(2+) is required as a cofactor. It depends on Ni(2+) as a cofactor.

It catalyses the reaction 1,2-dihydroxy-5-(methylsulfanyl)pent-1-en-3-one + O2 = 3-(methylsulfanyl)propanoate + CO + formate + 2 H(+). The enzyme catalyses 1,2-dihydroxy-5-(methylsulfanyl)pent-1-en-3-one + O2 = 4-methylsulfanyl-2-oxobutanoate + formate + 2 H(+). It functions in the pathway amino-acid biosynthesis; L-methionine biosynthesis via salvage pathway; L-methionine from S-methyl-5-thio-alpha-D-ribose 1-phosphate: step 5/6. Catalyzes 2 different reactions between oxygen and the acireductone 1,2-dihydroxy-3-keto-5-methylthiopentene (DHK-MTPene) depending upon the metal bound in the active site. Fe-containing acireductone dioxygenase (Fe-ARD) produces formate and 2-keto-4-methylthiobutyrate (KMTB), the alpha-ketoacid precursor of methionine in the methionine recycle pathway. Ni-containing acireductone dioxygenase (Ni-ARD) produces methylthiopropionate, carbon monoxide and formate, and does not lie on the methionine recycle pathway. In Bacillus cereus (strain ZK / E33L), this protein is Acireductone dioxygenase.